Consider the following 130-residue polypeptide: DNA-directed RNA polymerase subunit omega (130 aa).

The tract at residues 110 to 130 (EELLKGLEGLAPPEEQPEEEE) is disordered.

The protein belongs to the RNA polymerase subunit omega family. In terms of assembly, the RNAP catalytic core consists of 2 alpha, 1 beta, 1 beta' and 1 omega subunit. When a sigma factor is associated with the core the holoenzyme is formed, which can initiate transcription.

It carries out the reaction RNA(n) + a ribonucleoside 5'-triphosphate = RNA(n+1) + diphosphate. Functionally, promotes RNA polymerase assembly. Latches the N- and C-terminal regions of the beta' subunit thereby facilitating its interaction with the beta and alpha subunits. In Afipia carboxidovorans (strain ATCC 49405 / DSM 1227 / KCTC 32145 / OM5) (Oligotropha carboxidovorans), this protein is DNA-directed RNA polymerase subunit omega.